We begin with the raw amino-acid sequence, 529 residues long: Glycerol kinase 5 (529 aa).

ATP contacts are provided by threonine 22 and threonine 23. Glycerol-binding residues include arginine 92, aspartate 269, and glutamine 270. 3 residues coordinate ATP: threonine 291, glycine 334, and glycine 434.

This sequence belongs to the FGGY kinase family.

It localises to the cytoplasm. The catalysed reaction is glycerol + ATP = sn-glycerol 3-phosphate + ADP + H(+). Its pathway is polyol metabolism; glycerol degradation via glycerol kinase pathway; sn-glycerol 3-phosphate from glycerol: step 1/1. In terms of biological role, skin-specific kinase that plays a key role in glycerol metabolism, catalyzing its phosphorylation to produce sn-glycerol 3-phosphate. Involved in skin-specific regulation of sterol regulatory element-binding protein (SREBP) processing and lipid biosynthesis. The chain is Glycerol kinase 5 (gk5) from Danio rerio (Zebrafish).